A 109-amino-acid polypeptide reads, in one-letter code: Cell division protein ZapA (109 aa).

A coiled-coil region spans residues 21–99 (PEQQEALNQA…IEQALLEQGK (79 aa)).

It belongs to the ZapA family. Type 1 subfamily. Homodimer. Interacts with FtsZ.

It localises to the cytoplasm. Functionally, activator of cell division through the inhibition of FtsZ GTPase activity, therefore promoting FtsZ assembly into bundles of protofilaments necessary for the formation of the division Z ring. It is recruited early at mid-cell but it is not essential for cell division. This Pectobacterium atrosepticum (strain SCRI 1043 / ATCC BAA-672) (Erwinia carotovora subsp. atroseptica) protein is Cell division protein ZapA.